The chain runs to 316 residues: Pyridoxal 5'-phosphate synthase subunit PdxS (316 aa).

Aspartate 44 contributes to the D-ribose 5-phosphate binding site. Lysine 101 acts as the Schiff-base intermediate with D-ribose 5-phosphate in catalysis. Glycine 173 lines the D-ribose 5-phosphate pocket. Lysine 185 serves as a coordination point for D-glyceraldehyde 3-phosphate. D-ribose 5-phosphate-binding positions include glycine 234 and 255-256 (GS).

This sequence belongs to the PdxS/SNZ family. As to quaternary structure, in the presence of PdxT, forms a dodecamer of heterodimers.

The catalysed reaction is aldehydo-D-ribose 5-phosphate + D-glyceraldehyde 3-phosphate + L-glutamine = pyridoxal 5'-phosphate + L-glutamate + phosphate + 3 H2O + H(+). Its pathway is cofactor biosynthesis; pyridoxal 5'-phosphate biosynthesis. Functionally, catalyzes the formation of pyridoxal 5'-phosphate from ribose 5-phosphate (RBP), glyceraldehyde 3-phosphate (G3P) and ammonia. The ammonia is provided by the PdxT subunit. Can also use ribulose 5-phosphate and dihydroxyacetone phosphate as substrates, resulting from enzyme-catalyzed isomerization of RBP and G3P, respectively. This chain is Pyridoxal 5'-phosphate synthase subunit PdxS, found in Sulfurisphaera tokodaii (strain DSM 16993 / JCM 10545 / NBRC 100140 / 7) (Sulfolobus tokodaii).